A 147-amino-acid polypeptide reads, in one-letter code: D-aminoacyl-tRNA deacylase (147 aa).

The Gly-cisPro motif, important for rejection of L-amino acids motif lies at 136–137 (GP).

It belongs to the DTD family. Homodimer.

It is found in the cytoplasm. It catalyses the reaction glycyl-tRNA(Ala) + H2O = tRNA(Ala) + glycine + H(+). The enzyme catalyses a D-aminoacyl-tRNA + H2O = a tRNA + a D-alpha-amino acid + H(+). In terms of biological role, an aminoacyl-tRNA editing enzyme that deacylates mischarged D-aminoacyl-tRNAs. Also deacylates mischarged glycyl-tRNA(Ala), protecting cells against glycine mischarging by AlaRS. Acts via tRNA-based rather than protein-based catalysis; rejects L-amino acids rather than detecting D-amino acids in the active site. By recycling D-aminoacyl-tRNA to D-amino acids and free tRNA molecules, this enzyme counteracts the toxicity associated with the formation of D-aminoacyl-tRNA entities in vivo and helps enforce protein L-homochirality. This is D-aminoacyl-tRNA deacylase from Streptococcus pneumoniae serotype 2 (strain D39 / NCTC 7466).